We begin with the raw amino-acid sequence, 330 residues long: tRNA dimethylallyltransferase (330 aa).

Polar residues predominate over residues 1–11; sequence MDYSHSDSPST. Residues 1 to 21 are disordered; sequence MDYSHSDSPSTAPAGKTPVDQ. ATP is bound at residue 29-36; it reads GPTGAGKS. 31 to 36 contacts substrate; the sequence is TGAGKS. An interaction with substrate tRNA region spans residues 56–59; sequence DSMQ.

Belongs to the IPP transferase family. In terms of assembly, monomer. The cofactor is Mg(2+).

It catalyses the reaction adenosine(37) in tRNA + dimethylallyl diphosphate = N(6)-dimethylallyladenosine(37) in tRNA + diphosphate. Its function is as follows. Catalyzes the transfer of a dimethylallyl group onto the adenine at position 37 in tRNAs that read codons beginning with uridine, leading to the formation of N6-(dimethylallyl)adenosine (i(6)A). The protein is tRNA dimethylallyltransferase of Corynebacterium urealyticum (strain ATCC 43042 / DSM 7109).